Reading from the N-terminus, the 892-residue chain is DNA replication licensing factor mcm6 (892 aa).

Serine 96 and serine 98 each carry phosphoserine. Positions 426–633 constitute an MCM domain; the sequence is IYSRLTNSLA…VDRHLAKHIV (208 aa). 476-483 contacts ATP; sequence GDPSTSKS. The Arginine finger motif lies at 608–611; the sequence is SRFD. Positions 748 to 758 are enriched in acidic residues; the sequence is EDDAEAQELEN. Residues 748–774 are disordered; the sequence is EDDAEAQELENDNTNTTNGNDNVSSEE. A compositionally biased stretch (low complexity) spans 759–769; that stretch reads DNTNTTNGNDN.

It belongs to the MCM family. Component of the mcm2-7 complex. The complex forms a toroidal hexameric ring with the proposed subunit order mcm2-mcm6-mcm4-mcm7-mcm3-mcm5. The heterodimers of mcm4/mcm6 and mcm3/mcm5 interact with mcm2 and mcm7. Interacts with sld3.

The protein localises to the nucleus. It carries out the reaction ATP + H2O = ADP + phosphate + H(+). In terms of biological role, acts as a component of the mcm2-7 complex (mcm complex) which is the putative replicative helicase essential for 'once per cell cycle' DNA replication initiation and elongation in eukaryotic cells. The active ATPase sites in the mcm2-7 ring are formed through the interaction surfaces of two neighboring subunits such that a critical structure of a conserved arginine finger motif is provided in trans relative to the ATP-binding site of the Walker A box of the adjacent subunit. The six ATPase active sites, however, are likely to contribute differentially to the complex helicase activity. This chain is DNA replication licensing factor mcm6 (mcm6), found in Schizosaccharomyces pombe (strain 972 / ATCC 24843) (Fission yeast).